A 613-amino-acid chain; its full sequence is Dihydroxy-acid dehydratase (613 aa).

Asp-81 provides a ligand contact to Mg(2+). Residue Cys-122 coordinates [2Fe-2S] cluster. Positions 123 and 124 each coordinate Mg(2+). Position 124 is an N6-carboxylysine (Lys-124). Cys-195 contacts [2Fe-2S] cluster. Residue Glu-491 coordinates Mg(2+). The Proton acceptor role is filled by Ser-517.

The protein belongs to the IlvD/Edd family. Homodimer. [2Fe-2S] cluster serves as cofactor. Requires Mg(2+) as cofactor.

The enzyme catalyses (2R)-2,3-dihydroxy-3-methylbutanoate = 3-methyl-2-oxobutanoate + H2O. It carries out the reaction (2R,3R)-2,3-dihydroxy-3-methylpentanoate = (S)-3-methyl-2-oxopentanoate + H2O. It participates in amino-acid biosynthesis; L-isoleucine biosynthesis; L-isoleucine from 2-oxobutanoate: step 3/4. The protein operates within amino-acid biosynthesis; L-valine biosynthesis; L-valine from pyruvate: step 3/4. Functions in the biosynthesis of branched-chain amino acids. Catalyzes the dehydration of (2R,3R)-2,3-dihydroxy-3-methylpentanoate (2,3-dihydroxy-3-methylvalerate) into 2-oxo-3-methylpentanoate (2-oxo-3-methylvalerate) and of (2R)-2,3-dihydroxy-3-methylbutanoate (2,3-dihydroxyisovalerate) into 2-oxo-3-methylbutanoate (2-oxoisovalerate), the penultimate precursor to L-isoleucine and L-valine, respectively. The polypeptide is Dihydroxy-acid dehydratase (Vibrio atlanticus (strain LGP32) (Vibrio splendidus (strain Mel32))).